The primary structure comprises 1183 residues: Probable RNA-dependent RNA polymerase 4 (1183 aa).

Belongs to the RdRP family. Expressed in shoot apical meristem (SAM) and panicles.

The enzyme catalyses RNA(n) + a ribonucleoside 5'-triphosphate = RNA(n+1) + diphosphate. Probably involved in the RNA silencing pathway and required for the generation of small interfering RNAs (siRNAs). The polypeptide is Probable RNA-dependent RNA polymerase 4 (RDR4) (Oryza sativa subsp. japonica (Rice)).